Reading from the N-terminus, the 183-residue chain is Adenylate kinase (183 aa).

12–17 (GAGKGT) lines the ATP pocket. The interval 32-61 (STGDLLRSEVAAGTALGQEAEAVMNRGELV) is NMP. AMP-binding positions include Thr33, Arg38, 59-61 (ELV), 86-89 (GFPR), and Gln93. The tract at residues 127 to 133 (ARGRDDD) is LID. Arg128 is a binding site for ATP. Arg130 and Arg141 together coordinate AMP. Gly169 lines the ATP pocket.

This sequence belongs to the adenylate kinase family. As to quaternary structure, monomer.

Its subcellular location is the cytoplasm. It catalyses the reaction AMP + ATP = 2 ADP. It functions in the pathway purine metabolism; AMP biosynthesis via salvage pathway; AMP from ADP: step 1/1. Catalyzes the reversible transfer of the terminal phosphate group between ATP and AMP. Plays an important role in cellular energy homeostasis and in adenine nucleotide metabolism. In Parasynechococcus marenigrum (strain WH8102), this protein is Adenylate kinase.